The sequence spans 150 residues: 3-dehydroquinate dehydratase (150 aa).

Y26 serves as the catalytic Proton acceptor. Substrate contacts are provided by N77, H83, and D90. H103 (proton donor) is an active-site residue. Substrate contacts are provided by residues 104–105 (LS) and R114.

Belongs to the type-II 3-dehydroquinase family. As to quaternary structure, homododecamer.

It carries out the reaction 3-dehydroquinate = 3-dehydroshikimate + H2O. The protein operates within metabolic intermediate biosynthesis; chorismate biosynthesis; chorismate from D-erythrose 4-phosphate and phosphoenolpyruvate: step 3/7. In terms of biological role, catalyzes a trans-dehydration via an enolate intermediate. This Erwinia tasmaniensis (strain DSM 17950 / CFBP 7177 / CIP 109463 / NCPPB 4357 / Et1/99) protein is 3-dehydroquinate dehydratase.